Consider the following 433-residue polypeptide: Serine hydroxymethyltransferase (433 aa).

121-123 (AHV) contributes to the (6S)-5,6,7,8-tetrahydrofolate binding site. Lys227 carries the N6-(pyridoxal phosphate)lysine modification. Glu243 contributes to the (6S)-5,6,7,8-tetrahydrofolate binding site.

The protein belongs to the SHMT family. In terms of assembly, homodimer. It depends on pyridoxal 5'-phosphate as a cofactor.

The protein resides in the cytoplasm. The protein operates within amino-acid biosynthesis; glycine biosynthesis; glycine from L-serine: step 1/1. Its function is as follows. Catalyzes the reversible interconversion of serine and glycine with a modified folate serving as the one-carbon carrier. Also exhibits a pteridine-independent aldolase activity toward beta-hydroxyamino acids, producing glycine and aldehydes, via a retro-aldol mechanism. This Saccharolobus islandicus (strain M.14.25 / Kamchatka #1) (Sulfolobus islandicus) protein is Serine hydroxymethyltransferase.